The following is a 445-amino-acid chain: Argininosuccinate synthase (445 aa).

ATP is bound by residues 17 to 25 and A43; that span reads AFSGGLDTS. Residue Y99 participates in L-citrulline binding. ATP-binding residues include G129 and T131. Residues T131, N135, and D136 each coordinate L-aspartate. L-citrulline is bound at residue N135. D136 is a binding site for ATP. The L-citrulline site is built by R139 and S192. D194 lines the ATP pocket. Residues T201, E203, and E280 each contribute to the L-citrulline site.

It belongs to the argininosuccinate synthase family. Type 2 subfamily. As to quaternary structure, homotetramer.

It localises to the cytoplasm. It carries out the reaction L-citrulline + L-aspartate + ATP = 2-(N(omega)-L-arginino)succinate + AMP + diphosphate + H(+). It participates in amino-acid biosynthesis; L-arginine biosynthesis; L-arginine from L-ornithine and carbamoyl phosphate: step 2/3. In Rhodopseudomonas palustris (strain ATCC BAA-98 / CGA009), this protein is Argininosuccinate synthase.